The chain runs to 138 residues: Nucleoside diphosphate kinase (138 aa).

ATP is bound by residues Lys9, Phe57, Arg85, Thr91, Arg102, and Asn112. His115 functions as the Pros-phosphohistidine intermediate in the catalytic mechanism.

It belongs to the NDK family. As to quaternary structure, homotetramer. The cofactor is Mg(2+).

It is found in the cytoplasm. The catalysed reaction is a 2'-deoxyribonucleoside 5'-diphosphate + ATP = a 2'-deoxyribonucleoside 5'-triphosphate + ADP. It catalyses the reaction a ribonucleoside 5'-diphosphate + ATP = a ribonucleoside 5'-triphosphate + ADP. In terms of biological role, major role in the synthesis of nucleoside triphosphates other than ATP. The ATP gamma phosphate is transferred to the NDP beta phosphate via a ping-pong mechanism, using a phosphorylated active-site intermediate. The polypeptide is Nucleoside diphosphate kinase (Desulfatibacillum aliphaticivorans).